Here is a 328-residue protein sequence, read N- to C-terminus: Phenylalanine--tRNA ligase alpha subunit (328 aa).

Glutamate 245 contacts Mg(2+).

It belongs to the class-II aminoacyl-tRNA synthetase family. Phe-tRNA synthetase alpha subunit type 1 subfamily. As to quaternary structure, tetramer of two alpha and two beta subunits. Mg(2+) serves as cofactor.

The protein localises to the cytoplasm. It carries out the reaction tRNA(Phe) + L-phenylalanine + ATP = L-phenylalanyl-tRNA(Phe) + AMP + diphosphate + H(+). The sequence is that of Phenylalanine--tRNA ligase alpha subunit from Helicobacter acinonychis (strain Sheeba).